A 511-amino-acid chain; its full sequence is Ectonucleoside triphosphate diphosphohydrolase 1 (511 aa).

Topologically, residues 1–16 (MEDIKDSKVKRFCSKN) are cytoplasmic. A helical membrane pass occupies residues 17–37 (ILIILGFSSVLAVIALIAVGL). Topologically, residues 38 to 478 (THNKPLPENV…LSPPLPHSTY (441 aa)) are extracellular. The tract at residues 46–171 (NVKYGIVLDA…DFQGAKIITG (126 aa)) is N-terminal lobe. Residue N73 is glycosylated (N-linked (GlcNAc...) asparagine). An intrachain disulfide couples C84 to C108. The Proton acceptor role is filled by E174. Residues 205–441 (QATFGALDLG…GTSWDQIHFM (237 aa)) form a C-terminal lobe region. Residues N226, N291, and N333 are each glycosylated (N-linked (GlcNAc...) asparagine). Disulfide bonds link C254/C300 and C281/C324. C337 and C342 are disulfide-bonded. The N-linked (GlcNAc...) asparagine glycan is linked to N374. A disulfide bridge connects residues C391 and C414. N429 and N458 each carry an N-linked (GlcNAc...) asparagine glycan. Residues 479-499 (ISLMVLFSLVLVAMVITGLFI) form a helical membrane-spanning segment. Residues 500–511 (FSKPSYFWKEAV) lie on the Cytoplasmic side of the membrane.

It belongs to the GDA1/CD39 NTPase family. Homodimer; disulfide-linked. Requires Ca(2+) as cofactor. Mg(2+) is required as a cofactor. N-glycosylated. Post-translationally, the N-terminus is blocked. In terms of processing, palmitoylated on Cys-13; which is required for caveola targeting. Expressed in primary neurons and astrocytes, kidney, liver, muscle, thymus, lung and spleen.

The protein localises to the membrane. It localises to the caveola. The enzyme catalyses a ribonucleoside 5'-triphosphate + 2 H2O = a ribonucleoside 5'-phosphate + 2 phosphate + 2 H(+). It catalyses the reaction a ribonucleoside 5'-triphosphate + H2O = a ribonucleoside 5'-diphosphate + phosphate + H(+). The catalysed reaction is a ribonucleoside 5'-diphosphate + H2O = a ribonucleoside 5'-phosphate + phosphate + H(+). It carries out the reaction ATP + 2 H2O = AMP + 2 phosphate + 2 H(+). The enzyme catalyses ATP + H2O = ADP + phosphate + H(+). It catalyses the reaction ADP + H2O = AMP + phosphate + H(+). The catalysed reaction is CTP + 2 H2O = CMP + 2 phosphate + 2 H(+). It carries out the reaction CTP + H2O = CDP + phosphate + H(+). The enzyme catalyses CDP + H2O = CMP + phosphate + H(+). It catalyses the reaction GTP + 2 H2O = GMP + 2 phosphate + 2 H(+). The catalysed reaction is GTP + H2O = GDP + phosphate + H(+). It carries out the reaction GDP + H2O = GMP + phosphate + H(+). The enzyme catalyses ITP + 2 H2O = IMP + 2 phosphate + 2 H(+). It catalyses the reaction ITP + H2O = IDP + phosphate + H(+). The catalysed reaction is IDP + H2O = IMP + phosphate + H(+). It carries out the reaction UTP + 2 H2O = UMP + 2 phosphate + 2 H(+). The enzyme catalyses UTP + H2O = UDP + phosphate + H(+). It catalyses the reaction UDP + H2O = UMP + phosphate + H(+). Catalyzes the hydrolysis of both di- and triphosphate nucleotides (NDPs and NTPs) and hydrolyze NTPs to nucleotide monophosphates (NMPs) in two distinct successive phosphate-releasing steps, with NDPs as intermediates and participates in the regulation of extracellular levels of nucleotides. By hydrolyzing proinflammatory ATP and platelet-activating ADP to AMP, it blocks platelet aggregation and supports blood flow. This Rattus norvegicus (Rat) protein is Ectonucleoside triphosphate diphosphohydrolase 1.